Consider the following 649-residue polypeptide: tRNA-guanine(15) transglycosylase (649 aa).

Catalysis depends on Asp88, which acts as the Nucleophile. Substrate-binding residues include Asp123 and Ala194. Zn(2+)-binding residues include Cys280, Cys282, and Cys285. Positions 572-647 constitute a PUA domain; sequence KYRVIVDKSV…VAVNIRGGLK (76 aa).

This sequence belongs to the archaeosine tRNA-ribosyltransferase family. Zn(2+) is required as a cofactor.

It catalyses the reaction guanosine(15) in tRNA + 7-cyano-7-deazaguanine = 7-cyano-7-carbaguanosine(15) in tRNA + guanine. It functions in the pathway tRNA modification; archaeosine-tRNA biosynthesis. Functionally, exchanges the guanine residue with 7-cyano-7-deazaguanine (preQ0) at position 15 in the dihydrouridine loop (D-loop) of archaeal tRNAs. The sequence is that of tRNA-guanine(15) transglycosylase from Methanococcus vannielii (strain ATCC 35089 / DSM 1224 / JCM 13029 / OCM 148 / SB).